Consider the following 565-residue polypeptide: Heme/hemopexin transporter protein HuxB (565 aa).

A signal peptide spans M1–A26. In terms of domain architecture, POTRA spans F73–G150.

The protein belongs to the TPS (TC 1.B.20) family.

Its subcellular location is the cell outer membrane. In terms of biological role, likely functions in the release of soluble HxuA from the cell. Its function is as follows. Probable member of a two partner secretion pathway (TPS) in which it mediates the secretion of HuxA. This Haemophilus influenzae (strain ATCC 51907 / DSM 11121 / KW20 / Rd) protein is Heme/hemopexin transporter protein HuxB (hxuB).